We begin with the raw amino-acid sequence, 1056 residues long: E3 SUMO-protein ligase ZNF451 (1056 aa).

Residues 1-39 (MGDPGPEIIESVPPAGPEASESTTDENEDDIQFVSEGPL) are disordered. Residues 1–246 (MGDPGPEIIE…AADGHSNSLL (246 aa)) are sufficient for E3 SUMO-protein ligase activity. Residues 1–344 (MGDPGPEIIE…RVRCQNAGPV (344 aa)) are important for interaction with SUMO1 and SUMO2. Residues 30 to 37 (DIQFVSEG) form an interaction with SUMO2 1 region. Residues 38 to 41 (PLRP) carry the PLRP motif. The interaction with SUMO2 2 stretch occupies residues 42-50 (VLEYIDLVS). Glycyl lysine isopeptide (Lys-Gly) (interchain with G-Cter in SUMO2) cross-links involve residues K75, K77, K106, K139, and K153. The residue at position 155 (S155) is a Phosphoserine. Position 158 is an omega-N-methylarginine (R158). A Glycyl lysine isopeptide (Lys-Gly) (interchain with G-Cter in SUMO2) cross-link involves residue K167. The interval 168 to 521 (PILCPIMHCN…HMSRFHGGAH (354 aa)) is important for interaction with SMAD4. A C2H2-type 1 zinc finger spans residues 169 to 195 (ILCPIMHCNKEFDNGHLLLGHLKRFDH). Residues 212–234 (FACAVCYEHFVTQQQYKDHLLSR) form a C2H2-type 2; degenerate zinc finger. Residues 253–277 (YACPQCFLLFSTKDECLKHMSTKNH) form a C2H2-type 3 zinc finger. Glycyl lysine isopeptide (Lys-Gly) (interchain with G-Cter in SUMO2) cross-links involve residues K270, K275, K283, K288, K301, and K309. Residues 315-338 (VKCVACHQTLRSHMELTAHFRVRC) form a C2H2-type 4; atypical zinc finger. The C2H2-type 5 zinc finger occupies 362 to 385 (GYCSDCNQVFMDVASTQSHKNSGH). A Glycyl lysine isopeptide (Lys-Gly) (interchain with G-Cter in SUMO2) cross-link involves residue K420. A Phosphoserine modification is found at S429. K431 is covalently cross-linked (Glycyl lysine isopeptide (Lys-Gly) (interchain with G-Cter in SUMO2)). C2H2-type zinc fingers lie at residues 494-517 (YKCV…SRFH) and 527-550 (FWCR…TEFH). Glycyl lysine isopeptide (Lys-Gly) (interchain with G-Cter in SUMO2) cross-links involve residues K539 and K583. Residues 604–629 (WQCRICEDMFESQECVKQHCMSLTSH) form a C2H2-type 8; atypical zinc finger. 2 C2H2-type zinc fingers span residues 634 to 657 (YSCA…QDEH) and 665 to 688 (YFCG…KEHH). K645 participates in a covalent cross-link: Glycyl lysine isopeptide (Lys-Gly) (interchain with G-Cter in SUMO2). K704 is covalently cross-linked (Glycyl lysine isopeptide (Lys-Gly) (interchain with G-Cter in SUMO1); alternate). K704 participates in a covalent cross-link: Glycyl lysine isopeptide (Lys-Gly) (interchain with G-Cter in SUMO2); alternate. Residues K729 and K746 each participate in a glycyl lysine isopeptide (Lys-Gly) (interchain with G-Cter in SUMO2) cross-link. 2 C2H2-type zinc fingers span residues 751-774 (FRCS…CQVH) and 787-810 (IKCG…HRKH). Residues K788, K815, K843, K849, K947, K988, and K989 each participate in a glycyl lysine isopeptide (Lys-Gly) (interchain with G-Cter in SUMO2) cross-link. Disordered stretches follow at residues 806–830 (FHRK…STCQ) and 839–858 (EKNL…KGAE). The segment covering 849-858 (KHSDVEKGAE) has biased composition (basic and acidic residues). Positions 1019-1045 (KECDSDDSSGMKGSPAEELRATEDVEL) are disordered. The span at 1033 to 1045 (PAEELRATEDVEL) shows a compositional bias: basic and acidic residues. Residues 1045–1056 (LEEAIRRSLEEM) form an important for ubiquitin binding region.

It belongs to the krueppel C2H2-type zinc-finger protein family. In terms of assembly, homooligomer. Interacts (via N-terminal region) with SUMO1. Interacts (via N-terminal region) with SUMO2. Interacts simultaneously with two SUMO2 chains. Identified in a complex with SUMO2 and UBE2I/UBC9, where one ZNF451 interacts with one UBE2I/UBC9 and two SUMO2 chains, one bound to the UBE2I/UBC9 active site and the other to another region of the same UBE2I/UBC9 molecule. Interacts (via C-terminus) with ubiquitin. Interacts (via N-terminal zinc-finger domains) with SMAD4 (via MH2 domain). Interacts with SMAD2 and SMAD3. Identified in a complex that contains at least ZNF451, SMAD2, SMAD3 and SMAD4. Interacts with EP300. Inhibits interaction between EP300 and the SMAD4 complex. Interacts with SIMC1. Sumoylated. Predominantly sumoylated on the N-terminal region that is important for interaction with SUMO1 and SUMO2. Sumoylation is important for localization in nuclear granules; desumoylation leads to diffuse nucleoplasmic location. Autosumoylated (in vitro). Sumoylation enhances E3 SUMO-protein ligase activity.

Its subcellular location is the nucleus. It is found in the PML body. The protein localises to the nucleoplasm. It participates in protein modification; protein sumoylation. Functionally, E3 SUMO-protein ligase; has a preference for SUMO2 and SUMO3 and facilitates UBE2I/UBC9-mediated sumoylation of target proteins. Plays a role in protein SUMO2 modification in response to stress caused by DNA damage and by proteasome inhibitors (in vitro). Required for MCM4 sumoylation. Has no activity with SUMO1. Preferentially transfers an additional SUMO2 chain onto the SUMO2 consensus site 'Lys-11'. Negatively regulates transcriptional activation mediated by the SMAD4 complex in response to TGF-beta signaling. Inhibits EP300-mediated acetylation of histone H3 at 'Lys-9'. Plays a role in regulating the transcription of AR targets. The polypeptide is E3 SUMO-protein ligase ZNF451 (Znf451) (Mus musculus (Mouse)).